A 632-amino-acid polypeptide reads, in one-letter code: MASSKKSKTHKKKKEVKSPIDLPNSKKPTRALSEQPSASETQSVSNKSRKSKFGKRLNFILGAILGICGAFFFAVGDDNAVFDPATLDKFGNMLGSSDLFDDIKGYLSYNVFKDAPFTTDKPSQSPSGNEVQVGLDMYNEGYRSDHPVIMVPGVISSGLESWSFNNCSIPYFRKRLWGSWSMLKAMFLDKQCWLEHLMLDKKTGLDPKGIKLRAAQGFEAADFFITGYWIWSKVIENLAAIGYEPNNMLSASYDWRLSYANLEERDKYFSKLKMFIEYSNIVHKKKVVLISHSMGSQVTYYFFKWVEAEGYGNGGPTWVNDHIEAFINISGSLIGAPKTVAALLSGEMKDTAQLNQFSVYGLEKFFSRSERAMMVRTMGGVSSMLPKGGDVVWGNASWAPDDLNQTNFSNGAIIRYREDIDKDHDEFDIDDALQFLKNVTDDDFKVMLAKNYSHGLAWTEKEVLKNNEMPSKWINPLETSLPYAPDMKIYCVHGVGKPTERGYYYTNNPEGQPVIDSSVNDGTKVENGIVMDDGDGTLPILALGLVCNKVWQTKRFNPANTSITNYEIKHEPAAFDLRGGPRSAEHVDILGHSELNEIILKVSSGHGDSVPNRYISDIQEIINEINLDKPRN.

Residues 1-15 are compositionally biased toward basic residues; it reads MASSKKSKTHKKKKE. A disordered region spans residues 1–47; the sequence is MASSKKSKTHKKKKEVKSPIDLPNSKKPTRALSEQPSASETQSVSNK. Topologically, residues 1–56 are cytoplasmic; the sequence is MASSKKSKTHKKKKEVKSPIDLPNSKKPTRALSEQPSASETQSVSNKSRKSKFGKR. Residues 32-46 show a composition bias toward polar residues; the sequence is LSEQPSASETQSVSN. A helical transmembrane segment spans residues 57–77; that stretch reads LNFILGAILGICGAFFFAVGD. Topologically, residues 78 to 632 are lumenal; that stretch reads DNAVFDPATL…NEINLDKPRN (555 aa). Residue Asp136 coordinates substrate. Residue Ser293 is the Acyl-ester intermediate of the active site. Met294 contributes to the substrate binding site. Residues Asp535 and His586 each act as charge relay system in the active site.

It belongs to the AB hydrolase superfamily. Lipase family.

The protein localises to the endoplasmic reticulum membrane. It carries out the reaction a glycerophospholipid + a 1,2-diacyl-sn-glycerol = a monoacylglycerophospholipid + a triacyl-sn-glycerol. The protein operates within glycerolipid metabolism; triacylglycerol biosynthesis. In terms of biological role, catalyzes triacylglycerol (TAG) formation by an acyl-CoA independent pathway. The enzyme specifically transfers acyl groups from the sn-2 position of a phospholipid to diacylglycerol (DAG), thus forming an sn-1-lysophospholipid. Plays a major role in triacylglycerol formation at log phase. Involved in lipid particle synthesis from the endoplasmic reticulum, promoting localized TAG production at discrete ER subdomains. This chain is Phospholipid:diacylglycerol acyltransferase (plh1), found in Schizosaccharomyces pombe (strain 972 / ATCC 24843) (Fission yeast).